A 238-amino-acid polypeptide reads, in one-letter code: MSQSLIVALDFPGKQDVEQFLRHFEGEELFVKVGMELFYKEGPAIITYLKEKGHKIFLDLKLHDIPNTVKSAMRSLASLDVDMVNVHAAGGNSMMKAAIEGLEEGKQEGKERPICIAVTQLTSTSEAMMKKEIGIEKTLEEAVAHYAKLTKESGLDGVVCSTLEVPKLREVCGDGFVTVTPGIRLASDDVNDQVRVATPKRARELGSSYIVVGRSITKAENPLEAYKTVKQQWEGVTV.

Substrate is bound by residues Asp10, Lys32, 59–68, Thr122, Arg184, Gln193, Gly213, and Arg214; that span reads DLKLHDIPNT. Lys61 functions as the Proton donor in the catalytic mechanism.

It belongs to the OMP decarboxylase family. Type 1 subfamily. Homodimer.

It carries out the reaction orotidine 5'-phosphate + H(+) = UMP + CO2. The protein operates within pyrimidine metabolism; UMP biosynthesis via de novo pathway; UMP from orotate: step 2/2. In terms of biological role, catalyzes the decarboxylation of orotidine 5'-monophosphate (OMP) to uridine 5'-monophosphate (UMP). The protein is Orotidine 5'-phosphate decarboxylase of Bacillus cereus (strain Q1).